The sequence spans 476 residues: Protein DETOXIFICATION 1 (476 aa).

The next 12 helical transmembrane spans lie at alanine 35 to valine 55, glycine 66 to valine 86, isoleucine 117 to leucine 137, isoleucine 146 to proline 166, alanine 184 to leucine 204, glycine 208 to valine 228, alanine 260 to leucine 280, valine 289 to alanine 309, valine 331 to threonine 351, valine 370 to leucine 390, isoleucine 402 to leucine 422, and leucine 433 to alanine 453.

This sequence belongs to the multi antimicrobial extrusion (MATE) (TC 2.A.66.1) family. Ubiquitous. Highest expression in flowers and stems.

It localises to the cell membrane. Functionally, efflux carrier for plant-derived alkaloids, antibiotics, heavy metal and other toxic compounds. Involved in cadmium detoxification. Requires probably a proton-motive force for the efflux. The sequence is that of Protein DETOXIFICATION 1 from Arabidopsis thaliana (Mouse-ear cress).